The primary structure comprises 153 residues: Aspartate carbamoyltransferase regulatory chain (153 aa).

Positions 109, 114, 138, and 141 each coordinate Zn(2+).

It belongs to the PyrI family. As to quaternary structure, contains catalytic and regulatory chains. The cofactor is Zn(2+).

Involved in allosteric regulation of aspartate carbamoyltransferase. In Escherichia coli O7:K1 (strain IAI39 / ExPEC), this protein is Aspartate carbamoyltransferase regulatory chain.